Consider the following 590-residue polypeptide: Keratin, type II cytoskeletal 5 (590 aa).

Over residues 1–18 (MSRQSSVSFRSGGSRSFS) the composition is skewed to low complexity. The tract at residues 1-20 (MSRQSSVSFRSGGSRSFSTA) is disordered. The head stretch occupies residues 1 to 167 (MSRQSSVSFR…DPSIQRVRTE (167 aa)). A phosphoserine mark is found at Ser5, Ser8, Ser16, and Ser21. Thr24 is modified (phosphothreonine; by CDK1). Phosphoserine is present on residues Ser26, Ser36, Ser50, Ser64, Ser71, Ser75, and Ser82. Thr151 carries the phosphothreonine; by CDK1 modification. A coil 1A region spans residues 168 to 203 (EREQIKTLNNKFASFIDKVRFLEQQNKVLDTKWTLL). An IF rod domain is found at 168-481 (EREQIKTLNN…KLLEGEECRL (314 aa)). The tract at residues 204–222 (QEQGTKTVRQNLEPLFEQY) is linker 1. Positions 223 to 315 (INNLRRQLDS…FFDAELSQMQ (93 aa)) are coil 1B. The segment at 316-338 (THVSDTSVVLSMDNNRNLDLDSI) is linker 12. The interval 339-477 (IAEVKAQYEE…ATYRKLLEGE (139 aa)) is coil 2. The tail stretch occupies residues 478–590 (ECRLSGEGVG…TSSSRKSFKS (113 aa)). A disordered region spans residues 566–590 (GSGGGSSSSVKFVSTTSSSRKSFKS). A compositionally biased stretch (low complexity) spans 572-590 (SSSVKFVSTTSSSRKSFKS).

The protein belongs to the intermediate filament family. In terms of assembly, heterodimer of a type I and a type II keratin. Heterodimer with type I keratin KRT25 leading to the formation of keratin intermediate filament (KIF) network. Forms a heterodimer (via 2B domains) with KRT14 (via 2B domains). Interacts with PLEC isoform 1C, when in a heterodimer with KRT14. Interacts with TCHP. Interacts with EPPK1. Interacts with AMELX. Interacts with PKP1 (via N-terminus) and PKP2. In terms of processing, phosphorylated by CDK1, AURKB and Rho-kinase, phosphorylation is regulated by the cell cycle. Thr-24 phosphorylation, mediated by CDK1, peaks during prometaphase or metaphase cells with phosphorylated filamentous structures evident throughout the cytoplasm during early mitosis. CDK1 phosphorylates Thr-24 in mitotic cells at the site of injury. Post-translationally, O-glycosylated. Expressed in corneal epithelium (at protein level). Expressed in keratinocytes (at protein level).

The protein resides in the cytoplasm. In terms of biological role, required for the formation of keratin intermediate filaments in the basal epidermis and maintenance of the skin barrier in response to mechanical stress. Regulates the recruitment of Langerhans cells to the epidermis, potentially by modulation of the abundance of macrophage chemotactic cytokines, macrophage inflammatory cytokines and CTNND1 localization in keratinocytes. This Homo sapiens (Human) protein is Keratin, type II cytoskeletal 5 (KRT5).